The following is a 490-amino-acid chain: B3 domain-containing protein REM14 (490 aa).

3 DNA-binding regions (TF-B3) span residues 3–95, 130–226, and 236–333; these read NQHF…LGPS, CFSA…LPKG, and CFVA…LSNE. Positions 343 to 367 are disordered; that stretch reads NEVESLSTDQESHEESSHNEKISRR. Residues 352–364 show a composition bias toward basic and acidic residues; sequence QESHEESSHNEKI. A DNA-binding region (TF-B3 4) is located at residues 387-484; the sequence is FVTLNLTPYN…TSCVLKFCSK (98 aa).

Its subcellular location is the nucleus. The protein is B3 domain-containing protein REM14 (REM14) of Arabidopsis thaliana (Mouse-ear cress).